We begin with the raw amino-acid sequence, 1395 residues long: Adventurous-gliding motility protein Z (1395 aa).

The Response regulatory domain occupies 4–122 (RVLIVESEHD…ELAALSHGIV (119 aa)). Asp48 is modified (4-aspartylphosphate). 6 disordered regions span residues 137-172 (LNGT…AMTE), 874-893 (AAES…GLRS), 919-947 (EQHA…ARAH), 1212-1249 (AAES…AAKQ), 1287-1312 (RYKS…EDDE), and 1326-1395 (AAAA…ELDK). A coiled-coil region spans residues 213–911 (EGKIQILRDE…LEQTHGQLAA (699 aa)). Basic and acidic residues-rich tracts occupy residues 919 to 928 (EQHAHQESRK) and 1228 to 1249 (QKER…AAKQ). Low complexity-rich tracts occupy residues 1291 to 1306 (KSAT…AKPA) and 1326 to 1352 (AAAA…KKAP). Acidic residues predominate over residues 1382–1395 (EDDDWTALVDELDK).

In terms of assembly, interacts with MglA.

The protein resides in the cytoplasm. Functionally, required for adventurous-gliding motility (A motility), in response to environmental signals sensed by the frz chemosensory system. Forms ordered clusters that span the cell length and that remain stationary relative to the surface across which the cells move, serving as anchor points (focal, transient adhesion sites) that allow the bacterium to move forward. Clusters disassemble at the lagging cell pole. The chain is Adventurous-gliding motility protein Z (aglZ) from Myxococcus xanthus (strain DK1622).